Reading from the N-terminus, the 430-residue chain is N-acylneuraminate cytidylyltransferase A (430 aa).

Positions 1–29 (MDAVNENGKRAMKDDSHGNSTSPKRRKSR) are disordered. Over residues 7–17 (NGKRAMKDDSH) the composition is skewed to basic and acidic residues. The Bipartite nuclear localization signal signature appears at 9–27 (KRAMKDDSHGNSTSPKRRK). Residues Arg-38, Asn-48, Arg-97, Ser-106, Ser-108, and Gln-129 each contribute to the substrate site. Arg-187 is an active-site residue.

Belongs to the CMP-NeuNAc synthase family. As to quaternary structure, homotetramer.

The protein resides in the nucleus. The enzyme catalyses an N-acylneuraminate + CTP = a CMP-N-acyl-beta-neuraminate + diphosphate. It functions in the pathway amino-sugar metabolism; N-acetylneuraminate metabolism. Its function is as follows. Catalyzes the activation of N-acetylneuraminic acid (NeuNAc) to cytidine 5'-monophosphate N-acetylneuraminic acid (CMP-NeuNAc), a substrate required for the addition of sialic acid. Also has activity towards N-glycolylneuraminic acid (Neu5Gc). Has weak activity towards 2-keto-3-deoxy-D-glycero-D-galacto-nononic acid (KDN). The chain is N-acylneuraminate cytidylyltransferase A from Danio rerio (Zebrafish).